The sequence spans 395 residues: GPI-anchor transamidase (395 aa).

The N-terminal stretch at 1–27 is a signal peptide; the sequence is MAVTDSLSRAASTLAAVLLLSFGSVAA. Residues 28 to 368 lie on the Lumenal side of the membrane; the sequence is SHIEDQAEQF…PKLKDWHPPG (341 aa). Positions 79, 82, 118, and 120 each coordinate Ca(2+). The Proton donor role is filled by His-164. The active-site Nucleophile; acyl-thioester intermediate is Cys-206. Positions 206, 232, and 234 each coordinate a protein. The autoinhibitory loop stretch occupies residues 231-236; that stretch reads DSLSHQ. An intrachain disulfide couples Cys-275 to Cys-280. A helical membrane pass occupies residues 369 to 385; sequence GFILGLWALIIMVFFKT. At 386–395 the chain is on the cytoplasmic side; that stretch reads YGIKHMKFIF.

Belongs to the peptidase C13 family. As to quaternary structure, heteropentamer. Part of the GPI-anchor transamidase complex, consisting of PIGK, PIGT, PIGS, PIGU and GAA1. Interacts with GPAA1. Interacts with PIGT; this interaction, via a disulfide link, stabilizes the expression of GAA1 and PIGK and links them to PIGS. Post-translationally, the disulfide bond between PIGK/GPI8 and PIGT is important for normal enzyme activity.

It is found in the endoplasmic reticulum membrane. It functions in the pathway glycolipid biosynthesis; glycosylphosphatidylinositol-anchor biosynthesis. Its activity is regulated as follows. In the absence of proproteins substrates, exists in an inactive state with a disrupted catalytic site by an autoinhibitory loop. The binding of proprotein substrates, particularly the CSP region, to GPI-T triggers concerted conformational changes that alleviate the inhibition by the autoinhibitory loop. Meanwhile, proprotein residues near the omega- site induce the formation of a catalytic cleft for catalysis, following which the products are released and GPI-T reverts to the inactive state. Catalytic subunit of the glycosylphosphatidylinositol-anchor (GPI-anchor) transamidase (GPI-T) complex that catalyzes the formation of the linkage between a proprotein and a GPI-anchor and participates in GPI anchored protein biosynthesis. Recognizes diverse proproteins at a C-terminal signal peptide (CSP) region that lacks consensus sequence and replaces it with a GPI-anchor via a transamidation reaction. Transamidation catalysis reaction follows a two-phase mechanism. In the acyl-enzyme phase, the carbonyl group of the proproteins's omega-site undergoes a nucleophilic attack forming an enzyme-substrate thioester bond. Followed by a general acid catalysis that allows CSP releasing, regenerating the carbonyl, and forming the acyl-enzyme intermediate. In the GPI-anchor attachment phase, the amino group of the GPI-anchor's ethanolamine phosphate, the one on third mannose (EtNP3), mediates a nucleophilic attack on the carbonyl of the acyl-enzyme intermediate, replacing the CSP, allowing GPI-anchor attachment to the omega-residue, therefore forming the product and freeing the enzyme. This Pongo abelii (Sumatran orangutan) protein is GPI-anchor transamidase.